A 345-amino-acid chain; its full sequence is GDP-mannose transporter (345 aa).

Over 1-8 the chain is Cytoplasmic; the sequence is MDNHMLNR. A helical transmembrane segment spans residues 9 to 29; sequence ISKSPILPVVSYCMASILMTL. Over 30–40 the chain is Lumenal; the sequence is TNKYVLSSPGY. The helical transmembrane segment at 41 to 61 threads the bilayer; sequence NMNFLLLTVQSTVCVAAIGIL. Residues 62–78 are Cytoplasmic-facing; sequence KRLKVINYRDFDFREAK. The helical transmembrane segment at 79–101 threads the bilayer; it reads FWFPISFLLVAMIYTASKALQFL. Topologically, residues 102 to 104 are lumenal; the sequence is SVP. The chain crosses the membrane as a helical span at residues 105–127; it reads VYTIFKNLTIIIIAYGEVLWFGG. At 128-131 the chain is on the cytoplasmic side; that stretch reads HVTA. A helical membrane pass occupies residues 132–150; it reads LTLFSFGLMVLSSIVAAWA. The Lumenal segment spans residues 151–161; that stretch reads DIQSSSFASQT. A helical transmembrane segment spans residues 162 to 182; that stretch reads LNSGYLWMVLNCLTNAAFVLA. Topologically, residues 183-194 are cytoplasmic; sequence MRKRIKLTNFRD. A helical membrane pass occupies residues 195–215; that stretch reads FDTMFYNNLLSIPVLVICTLF. The Lumenal portion of the chain corresponds to 216–233; the sequence is TEDWSAENIAQNFPPDAK. The helical transmembrane segment at 234–254 threads the bilayer; that stretch reads FGVLMAMAISGVSSVGISYTS. Over 255–264 the chain is Cytoplasmic; the sequence is AWCVRVTSST. Residues 265-285 traverse the membrane as a helical segment; that stretch reads TYSMVGALNKLPLAIAGLVFF. The Lumenal segment spans residues 286-288; sequence DAP. Residues 289 to 309 traverse the membrane as a helical segment; it reads ITFGSVTAILLGFISGVVYAV. Residues 310 to 345 are Cytoplasmic-facing; that stretch reads AKSQQQRQKDPATILPMTHNPVSASSQSMRDSLSKS. A disordered region spans residues 319-345; it reads DPATILPMTHNPVSASSQSMRDSLSKS. The span at 329-345 shows a compositional bias: polar residues; sequence NPVSASSQSMRDSLSKS.

It belongs to the TPT transporter family. SLC35D subfamily. As to quaternary structure, homooligomer.

The protein resides in the golgi apparatus membrane. Its subcellular location is the cytoplasmic vesicle membrane. The protein localises to the endoplasmic reticulum membrane. Functionally, involved in the import of GDP-mannose from the cytoplasm into the Golgi lumen. This is GDP-mannose transporter (vrg4) from Schizosaccharomyces pombe (strain 972 / ATCC 24843) (Fission yeast).